The chain runs to 193 residues: CASP-like protein 1E1 (193 aa).

Over 1–30 (MESQNKASLPVMDGLERRVVASQSEGASTC) the chain is Cytoplasmic. A helical transmembrane segment spans residues 31 to 51 (DLLLRVLALVLTLAAAIVLGV). The Extracellular segment spans residues 52 to 86 (DKQTKVVPIKIVDTLPAINLPVSAKWHYLSAFTYS). Residues 87–107 (VASNAIACSYAALSLVLAVSG) form a helical membrane-spanning segment. At 108-113 (KKGIMS) the chain is on the cytoplasmic side. The chain crosses the membrane as a helical span at residues 114 to 134 (IVIVLDLLMVAMLFSSNGAAL). The Extracellular segment spans residues 135–162 (AIGLMGYQGNSHVRWTKVCHVFGRFCNQ). The chain crosses the membrane as a helical span at residues 163–183 (VAVSISLSLLGSILFLLLVGI). At 184–193 (TSLRLHKKSK) the chain is on the cytoplasmic side.

Belongs to the Casparian strip membrane proteins (CASP) family. Homodimer and heterodimers.

It is found in the cell membrane. The sequence is that of CASP-like protein 1E1 from Populus trichocarpa (Western balsam poplar).